The sequence spans 385 residues: Leucine aminopeptidase 1 (385 aa).

The N-terminal stretch at 1 to 19 (MKFPSFLSLGIAASTTALA) is a signal peptide. Residues 20–87 (ALPDQKPIGD…FPRAFAKTAV (68 aa)) constitute a propeptide that is removed on maturation. Asn-177 carries an N-linked (GlcNAc...) asparagine glycan. 2 residues coordinate Zn(2+): His-185 and Asp-204. Asn-229 is a glycosylation site (N-linked (GlcNAc...) asparagine). Residues Glu-243 and Asp-270 each coordinate Zn(2+). Cys-319 and Cys-323 are joined by a disulfide. His-352 contacts Zn(2+).

The protein belongs to the peptidase M28 family. M28E subfamily. As to quaternary structure, monomer. Zn(2+) is required as a cofactor.

The protein localises to the secreted. Functionally, extracellular aminopeptidase that allows assimilation of proteinaceous substrates. This chain is Leucine aminopeptidase 1 (LAP1), found in Ajellomyces dermatitidis (strain ER-3 / ATCC MYA-2586) (Blastomyces dermatitidis).